We begin with the raw amino-acid sequence, 240 residues long: Ribosomal RNA large subunit methyltransferase E (240 aa).

Gly residues predominate over residues 1 to 20 (MSKAGGNKGGSRTGGRGGAG). A disordered region spans residues 1-33 (MSKAGGNKGGSRTGGRGGAGSSNLHVRVKKKAG). S-adenosyl-L-methionine is bound by residues G92, W94, D115, D131, and D155. The active-site Proton acceptor is the K195.

It belongs to the class I-like SAM-binding methyltransferase superfamily. RNA methyltransferase RlmE family.

It localises to the cytoplasm. It catalyses the reaction uridine(2552) in 23S rRNA + S-adenosyl-L-methionine = 2'-O-methyluridine(2552) in 23S rRNA + S-adenosyl-L-homocysteine + H(+). In terms of biological role, specifically methylates the uridine in position 2552 of 23S rRNA at the 2'-O position of the ribose in the fully assembled 50S ribosomal subunit. The chain is Ribosomal RNA large subunit methyltransferase E from Brucella abortus (strain S19).